The chain runs to 752 residues: uncharacterized protein (752 aa).

2 positions are modified to phosphoserine: serine 202 and serine 582. The disordered stretch occupies residues 596–752 (EEEKESVEVE…KTGEDGEIVL (157 aa)). 2 stretches are compositionally biased toward basic and acidic residues: residues 601–613 (SVEV…KNDL) and 641–677 (LKSE…HFEV). Residues 695–718 (NNVAETILEVTSSPKSSENSQKQS) are compositionally biased toward polar residues. Serine 707 and serine 738 each carry phosphoserine.

This is an uncharacterized protein from Schizosaccharomyces pombe (strain 972 / ATCC 24843) (Fission yeast).